Here is a 254-residue protein sequence, read N- to C-terminus: MSPAAARAAFRAGLRVPTSGYSAGWTQANLIALPRDYAYDFLLFAQRNPKSCPVLDVTEPGETSASIFAGDLRTDLPAYRVYRDGELVEEVGDVTGLWRDDLVSFLVGCSFTFEAALLEAGVPVRHIETGGNVPMYRTNRDCRPAGRMSGPLVVSMRPVPASMVATAVRITSRYPAVHGAPVHIGEPADLGIGDIDSPDFGEPVEIRPGEIPVFWACGVTPQAAVMQSRPPFAIGHAPGHMAITDARDSEFLVP.

This sequence belongs to the D-glutamate cyclase family.

The sequence is that of Putative hydro-lyase SACE_1553 from Saccharopolyspora erythraea (strain ATCC 11635 / DSM 40517 / JCM 4748 / NBRC 13426 / NCIMB 8594 / NRRL 2338).